The sequence spans 64 residues: Large ribosomal subunit protein bL28 (64 aa).

The disordered stretch occupies residues 1 to 26 (MARRDQLTGKGPLSGNTRSHAMNHSK).

Belongs to the bacterial ribosomal protein bL28 family.

This Ureaplasma urealyticum serovar 10 (strain ATCC 33699 / Western) protein is Large ribosomal subunit protein bL28.